The chain runs to 328 residues: 4-hydroxy-3-methylbut-2-enyl diphosphate reductase (328 aa).

A [4Fe-4S] cluster-binding site is contributed by cysteine 13. 2 residues coordinate (2E)-4-hydroxy-3-methylbut-2-enyl diphosphate: histidine 41 and histidine 75. Dimethylallyl diphosphate-binding residues include histidine 41 and histidine 75. Positions 41 and 75 each coordinate isopentenyl diphosphate. Position 97 (cysteine 97) interacts with [4Fe-4S] cluster. Histidine 125 is a binding site for (2E)-4-hydroxy-3-methylbut-2-enyl diphosphate. Dimethylallyl diphosphate is bound at residue histidine 125. Histidine 125 is a binding site for isopentenyl diphosphate. Glutamate 127 serves as the catalytic Proton donor. Threonine 168 provides a ligand contact to (2E)-4-hydroxy-3-methylbut-2-enyl diphosphate. Cysteine 229 lines the [4Fe-4S] cluster pocket. Residues serine 257, serine 258, asparagine 259, and serine 306 each contribute to the (2E)-4-hydroxy-3-methylbut-2-enyl diphosphate site. The dimethylallyl diphosphate site is built by serine 257, serine 258, asparagine 259, and serine 306. 4 residues coordinate isopentenyl diphosphate: serine 257, serine 258, asparagine 259, and serine 306.

The protein belongs to the IspH family. [4Fe-4S] cluster is required as a cofactor.

It catalyses the reaction isopentenyl diphosphate + 2 oxidized [2Fe-2S]-[ferredoxin] + H2O = (2E)-4-hydroxy-3-methylbut-2-enyl diphosphate + 2 reduced [2Fe-2S]-[ferredoxin] + 2 H(+). The catalysed reaction is dimethylallyl diphosphate + 2 oxidized [2Fe-2S]-[ferredoxin] + H2O = (2E)-4-hydroxy-3-methylbut-2-enyl diphosphate + 2 reduced [2Fe-2S]-[ferredoxin] + 2 H(+). It participates in isoprenoid biosynthesis; dimethylallyl diphosphate biosynthesis; dimethylallyl diphosphate from (2E)-4-hydroxy-3-methylbutenyl diphosphate: step 1/1. The protein operates within isoprenoid biosynthesis; isopentenyl diphosphate biosynthesis via DXP pathway; isopentenyl diphosphate from 1-deoxy-D-xylulose 5-phosphate: step 6/6. Functionally, catalyzes the conversion of 1-hydroxy-2-methyl-2-(E)-butenyl 4-diphosphate (HMBPP) into a mixture of isopentenyl diphosphate (IPP) and dimethylallyl diphosphate (DMAPP). Acts in the terminal step of the DOXP/MEP pathway for isoprenoid precursor biosynthesis. This is 4-hydroxy-3-methylbut-2-enyl diphosphate reductase from Chlorobium phaeobacteroides (strain DSM 266 / SMG 266 / 2430).